The sequence spans 503 residues: MLFSQIVATSRDVGATRSRKVKVATLREALTRLEQAEVEPVVAWLSGELRQGRIGIGWRTVADIPATPADVAAVTVSEVDGTISAVAEVSGSGSAARRRELLADLFARTTADERDFLLRLLTGDLRQGALEGVMTDAIAAAADLPIEPVRRAFMLSGRLPATAVAAFDGGVDALTAFRLEVGRPVRPMLASPAESLADAWSELGGDVSVEYKLDGARIQVHRNGDEVRIFTRTLREITGSVPELVALVARLPCTSAVFDGETLALTDSGRPRPFQETMSRFGAESARDLLLHPYFFDCLHLDGVDLLDSPLEERLKALERVAPQHRIPGLIRPDSEGAATHFDDALAAGHEGVMVKSLTAPYAAGRRGRAWQKVKPEHTLDLVVLGAEWGYGRRTGYLSNLHLGARDPDGGAPIMVGKTFKGLTDALLQWQTDEFPRHERARDDHTVYLHPDLVVEIELDGVQVSTRYPGGLALRFARVLRYRPDKTAADADTIDAVRSLLPG.

Glutamate 210 contacts ATP. The active-site N6-AMP-lysine intermediate is lysine 212. Residues arginine 217, arginine 232, glutamate 261, phenylalanine 296, arginine 367, and lysine 373 each coordinate ATP.

It belongs to the ATP-dependent DNA ligase family. Requires Mg(2+) as cofactor.

The enzyme catalyses ATP + (deoxyribonucleotide)n-3'-hydroxyl + 5'-phospho-(deoxyribonucleotide)m = (deoxyribonucleotide)n+m + AMP + diphosphate.. Its function is as follows. DNA ligase that seals nicks in double-stranded DNA during DNA replication, DNA recombination and DNA repair. The chain is Probable DNA ligase from Rhodococcus opacus (strain B4).